Reading from the N-terminus, the 360-residue chain is Peptide chain release factor 1 (360 aa).

Gln-235 is modified (N5-methylglutamine). Residues 285-295 (RQAAEQTDMRR) are compositionally biased toward basic and acidic residues. The segment at 285 to 309 (RQAAEQTDMRRNLLGSGDRSDKIRT) is disordered.

Belongs to the prokaryotic/mitochondrial release factor family. Methylated by PrmC. Methylation increases the termination efficiency of RF1.

The protein resides in the cytoplasm. Peptide chain release factor 1 directs the termination of translation in response to the peptide chain termination codons UAG and UAA. This chain is Peptide chain release factor 1 (prfA), found in Haemophilus influenzae (strain ATCC 51907 / DSM 11121 / KW20 / Rd).